We begin with the raw amino-acid sequence, 501 residues long: Probable cysteine desulfurase, mitochondrial (501 aa).

Residues 172-173 (AT), asparagine 252, glutamine 280, and 300-302 (SAH) each bind pyridoxal 5'-phosphate. Lysine 303 carries the post-translational modification N6-(pyridoxal phosphate)lysine. Pyridoxal 5'-phosphate is bound at residue threonine 340. The Cysteine persulfide intermediate role is filled by cysteine 425. Cysteine 425 is a binding site for [2Fe-2S] cluster.

The protein belongs to the class-V pyridoxal-phosphate-dependent aminotransferase family. NifS/IscS subfamily. Pyridoxal 5'-phosphate serves as cofactor.

It is found in the mitochondrion. It carries out the reaction (sulfur carrier)-H + L-cysteine = (sulfur carrier)-SH + L-alanine. Functionally, catalyzes the removal of elemental sulfur from cysteine to produce alanine. It supplies the inorganic sulfur for iron-sulfur (Fe-S) clusters. Plays a role in both tRNA-processing and mitochondrial metabolism. Involved in the 2-thio-modification of both 5-carboxymethylaminomethyl-2-thiouridine in mitochondrial tRNAs and 5-methoxycarbonylmethyl-2-thiouridine (mcm5s2U) in cytoplasmic tRNAs. This chain is Probable cysteine desulfurase, mitochondrial, found in Schizosaccharomyces pombe (strain 972 / ATCC 24843) (Fission yeast).